Here is a 196-residue protein sequence, read N- to C-terminus: MSYYAFEGLIPVVHPTAFVHPSAVLIGDVIVGAGVYIGPLASLRGDYGRLIVQAGANIQDGCIMHGYCDTDTIVGENGHIGHGAILHGCVIGRDALVGMNSVIMDGAVIGEESIVAAISFVKAGFRGEKRQLLMGTPARAVRNVSDDELHWKRLNTKEYQDLVGRCHASLHETQPLRQMEENRPRLQGTTDVTPKR.

The disordered stretch occupies residues 173 to 196; the sequence is TQPLRQMEENRPRLQGTTDVTPKR. Polar residues predominate over residues 187–196; the sequence is QGTTDVTPKR.

It belongs to the transferase hexapeptide repeat family.

It functions in the pathway amine and polyamine metabolism; carnitine metabolism. In terms of biological role, overproduction of CaiE stimulates the activity of CaiB and CaiD. This chain is Carnitine operon protein CaiE, found in Escherichia coli O7:K1 (strain IAI39 / ExPEC).